The following is a 328-amino-acid chain: Trans-O-hydroxybenzylidenepyruvate hydratase-aldolase (328 aa).

This sequence belongs to the DapA family. In terms of assembly, homotrimer.

The catalysed reaction is (3E)-4-(2-hydroxyphenyl)-2-oxobut-3-enoate + H2O = salicylaldehyde + pyruvate. It participates in aromatic compound metabolism; naphthalene degradation. Inhibited bye p-chloromercuribenzoate and salicylaldehyde. Activated by salicylate. In terms of biological role, involved in the naphthalene and naphthalenesulfonate catabolic pathway. Catalyzes the transformation of trans-O-hydroxybenzylidenepyruvate (THBPA) to salicylaldehyde and pyruvate. The reaction is reversible. Can also use 2,4-dihydroxybenzalpyruvate (2,4-DHBP) and 2,6-dihydroxybenzalpyruvate (2,6-DHBP). In Sphingobium xenophagum, this protein is Trans-O-hydroxybenzylidenepyruvate hydratase-aldolase (nsaE).